The primary structure comprises 204 residues: Fruiting body protein SC7 (204 aa).

The signal sequence occupies residues 1-16; sequence MKLTVILLTAVLAASA. Residues 62–185 form the SCP domain; sequence LKAHNNERAQ…KTLWYYVCNY (124 aa). N-linked (GlcNAc...) asparagine glycosylation is found at asparagine 80, asparagine 118, and asparagine 134.

Belongs to the CRISP family.

The protein resides in the secreted. The sequence is that of Fruiting body protein SC7 (SC7) from Schizophyllum commune (Split gill fungus).